Here is a 138-residue protein sequence, read N- to C-terminus: Cell division protein SepF (138 aa).

It belongs to the SepF family. Homodimer. Interacts with FtsZ.

The protein localises to the cytoplasm. In terms of biological role, cell division protein that is part of the divisome complex and is recruited early to the Z-ring. Probably stimulates Z-ring formation, perhaps through the cross-linking of FtsZ protofilaments. Its function overlaps with FtsA. The sequence is that of Cell division protein SepF from Limosilactobacillus reuteri (strain DSM 20016) (Lactobacillus reuteri).